The primary structure comprises 80 residues: Protein CEBPZOS (80 aa).

A helical membrane pass occupies residues 15–31 (GVLAAELVGVAGAYCLF).

Its subcellular location is the mitochondrion membrane. This Mus musculus (Mouse) protein is Protein CEBPZOS.